A 225-amino-acid polypeptide reads, in one-letter code: Methylthioribulose-1-phosphate dehydratase (225 aa).

Zn(2+) is bound by residues His-106 and His-108.

Belongs to the aldolase class II family. MtnB subfamily. Zn(2+) is required as a cofactor.

It catalyses the reaction 5-(methylsulfanyl)-D-ribulose 1-phosphate = 5-methylsulfanyl-2,3-dioxopentyl phosphate + H2O. It functions in the pathway amino-acid biosynthesis; L-methionine biosynthesis via salvage pathway; L-methionine from S-methyl-5-thio-alpha-D-ribose 1-phosphate: step 2/6. Catalyzes the dehydration of methylthioribulose-1-phosphate (MTRu-1-P) into 2,3-diketo-5-methylthiopentyl-1-phosphate (DK-MTP-1-P). The chain is Methylthioribulose-1-phosphate dehydratase from Xanthomonas oryzae pv. oryzae (strain MAFF 311018).